A 131-amino-acid polypeptide reads, in one-letter code: Probable histone H2A.3 (131 aa).

A disordered region spans residues 1–23 (MAGRGKQLGSGAAKKSTSRSSKA). Over residues 9–23 (GSGAAKKSTSRSSKA) the composition is skewed to low complexity.

Belongs to the histone H2A family. In terms of assembly, the nucleosome is a histone octamer containing two molecules each of H2A, H2B, H3 and H4 assembled in one H3-H4 heterotetramer and two H2A-H2B heterodimers. The octamer wraps approximately 147 bp of DNA. Not ubiquitinated. As to expression, expressed in meristems and dividing cells.

The protein localises to the nucleus. It localises to the chromosome. In terms of biological role, core component of nucleosome. Nucleosomes wrap and compact DNA into chromatin, limiting DNA accessibility to the cellular machineries which require DNA as a template. Histones thereby play a central role in transcription regulation, DNA repair, DNA replication and chromosomal stability. DNA accessibility is regulated via a complex set of post-translational modifications of histones, also called histone code, and nucleosome remodeling. In Arabidopsis thaliana (Mouse-ear cress), this protein is Probable histone H2A.3.